Consider the following 808-residue polypeptide: Probable inorganic carbon transporter subunit DabA (808 aa).

The Zn(2+) site is built by Cys-335, Asp-337, His-497, and Cys-512.

It belongs to the inorganic carbon transporter (TC 9.A.2) DabA family. As to quaternary structure, forms a complex with DabB. It depends on Zn(2+) as a cofactor.

It is found in the cell inner membrane. Functionally, part of an energy-coupled inorganic carbon pump. The chain is Probable inorganic carbon transporter subunit DabA from Rhodopseudomonas palustris (strain TIE-1).